Reading from the N-terminus, the 698-residue chain is Serine/alanine racemase (698 aa).

The Cytoplasmic portion of the chain corresponds to 1–10 (MKNKGIDQFR). Residues 11–31 (VIAAMMVVAIHCLPLHYLWPE) form a helical membrane-spanning segment. Topologically, residues 32–42 (GDILITLTIFR) are extracellular. The helical transmembrane segment at 43 to 63 (VAVPFFFMISGYYVFAELAVA) threads the bilayer. Over 64 to 81 (NSYPSRQRVFNFIKKQLK) the chain is Cytoplasmic. The helical transmembrane segment at 82–102 (VYLLATLMFLPLALYSQTIGF) threads the bilayer. At 103 to 121 (DLPVGTLVQVLLVNGILYH) the chain is on the extracellular side. The helical transmembrane segment at 122–142 (LWYFPALITGSLLLTSLLIHV) threads the bilayer. At 143-147 (SFKKV) the chain is on the cytoplasmic side. The chain crosses the membrane as a helical span at residues 148 to 168 (FWLAAGLYLIGLGGDSWFGLI). Residues 169-183 (QQTPIEPFYTAVFHL) are Extracellular-facing. Residues 184 to 204 (LDGTRNGIFFTPLFLCLGVLV) form a helical membrane-spanning segment. Residues 205 to 216 (RKQSEKRSLSKT) lie on the Cytoplasmic side of the membrane. The chain crosses the membrane as a helical span at residues 217-237 (ALFFLISLIGLLIESAYLHGF). At 238–244 (SIPKHDS) the chain is on the extracellular side. Residues 245 to 265 (MYLFLPVVLFFLFPLILRWHP) traverse the membrane as a helical segment. Topologically, residues 266 to 274 (HRTWKHPGQ) are cytoplasmic. Residues 275–295 (LSLWLYLLHPYTIAGTHFLSQ) form a helical membrane-spanning segment. At 296-301 (KISILQ) the chain is on the extracellular side. Residues 302-322 (NNLINYLVVLILTIGFICLFL) form a helical membrane-spanning segment. The Cytoplasmic portion of the chain corresponds to 323 to 698 (RQKHSWFRHK…IGPRVSARIK (376 aa)). The racemase stretch occupies residues 332–698 (KQTTPVKRAV…IGPRVSARIK (367 aa)). Residue Lys-371 is the Proton acceptor of the active site. Position 371 is an N6-(pyridoxal phosphate)lysine (Lys-371). Arg-465 is a substrate binding site. Residue Tyr-597 is the Proton acceptor of the active site. Met-646 is a binding site for substrate.

This sequence in the N-terminal section; belongs to the acyltransferase 3 family. The protein in the C-terminal section; belongs to the alanine racemase family. In terms of assembly, homodimer. Pyridoxal 5'-phosphate is required as a cofactor.

Its subcellular location is the cell membrane. The catalysed reaction is L-alanine = D-alanine. The enzyme catalyses L-serine = D-serine. It participates in amino-acid biosynthesis; D-alanine biosynthesis; D-alanine from L-alanine: step 1/1. Its function is as follows. Catalyzes the interconversion of L-serine and D-serine, and L-alanine and D-alanine. L-alanine is racemized at a rate that is 14% of that of L-serine. Together with VanC/VanC1 and VanXYC, required for vancomycin resistance in E.gallinarum strain BM4174. In Enterococcus gallinarum, this protein is Serine/alanine racemase.